Consider the following 324-residue polypeptide: [Acyl-carrier-protein] phosphodiesterase PptH (324 aa).

Mn(2+) is bound by residues aspartate 22, histidine 24, and aspartate 51. Residues aspartate 51, asparagine 79, histidine 205, and histidine 246 each contribute to the Fe cation site. Position 248 (histidine 248) interacts with Mn(2+).

The protein belongs to the metallophosphoesterase superfamily. Fe(3+) is required as a cofactor. It depends on Mn(2+) as a cofactor.

The enzyme catalyses holo-[ACP] + H2O = apo-[ACP] + (R)-4'-phosphopantetheine + H(+). Catalyzes the hydrolysis of the phosphopantetheine group from substrate holo-carrier proteins. This Mycobacterium tuberculosis (strain ATCC 25618 / H37Rv) protein is [Acyl-carrier-protein] phosphodiesterase PptH.